The sequence spans 282 residues: Pantothenate synthetase (282 aa).

30–37 serves as a coordination point for ATP; the sequence is MGYLHEGH. Histidine 37 (proton donor) is an active-site residue. Glutamine 61 provides a ligand contact to (R)-pantoate. Glutamine 61 contacts beta-alanine. 147 to 150 provides a ligand contact to ATP; it reads GMKD. Glutamine 153 contributes to the (R)-pantoate binding site. ATP contacts are provided by residues valine 176 and 184–187; that span reads KSSR.

It belongs to the pantothenate synthetase family. In terms of assembly, homodimer.

The protein localises to the cytoplasm. It carries out the reaction (R)-pantoate + beta-alanine + ATP = (R)-pantothenate + AMP + diphosphate + H(+). It functions in the pathway cofactor biosynthesis; (R)-pantothenate biosynthesis; (R)-pantothenate from (R)-pantoate and beta-alanine: step 1/1. Its function is as follows. Catalyzes the condensation of pantoate with beta-alanine in an ATP-dependent reaction via a pantoyl-adenylate intermediate. This Bacillus mycoides (strain KBAB4) (Bacillus weihenstephanensis) protein is Pantothenate synthetase.